The following is a 158-amino-acid chain: SsrA-binding protein (158 aa).

It belongs to the SmpB family.

Its subcellular location is the cytoplasm. Required for rescue of stalled ribosomes mediated by trans-translation. Binds to transfer-messenger RNA (tmRNA), required for stable association of tmRNA with ribosomes. tmRNA and SmpB together mimic tRNA shape, replacing the anticodon stem-loop with SmpB. tmRNA is encoded by the ssrA gene; the 2 termini fold to resemble tRNA(Ala) and it encodes a 'tag peptide', a short internal open reading frame. During trans-translation Ala-aminoacylated tmRNA acts like a tRNA, entering the A-site of stalled ribosomes, displacing the stalled mRNA. The ribosome then switches to translate the ORF on the tmRNA; the nascent peptide is terminated with the 'tag peptide' encoded by the tmRNA and targeted for degradation. The ribosome is freed to recommence translation, which seems to be the essential function of trans-translation. The protein is SsrA-binding protein of Saccharopolyspora erythraea (strain ATCC 11635 / DSM 40517 / JCM 4748 / NBRC 13426 / NCIMB 8594 / NRRL 2338).